Reading from the N-terminus, the 856-residue chain is DNA mismatch repair protein MutS (856 aa).

600-607 (GPNMSGKS) provides a ligand contact to ATP.

The protein belongs to the DNA mismatch repair MutS family.

Functionally, this protein is involved in the repair of mismatches in DNA. It is possible that it carries out the mismatch recognition step. This protein has a weak ATPase activity. The chain is DNA mismatch repair protein MutS from Lactobacillus acidophilus (strain ATCC 700396 / NCK56 / N2 / NCFM).